A 757-amino-acid polypeptide reads, in one-letter code: Endonuclease MutS2 (757 aa).

321 to 328 is a binding site for ATP; sequence GPNMGGKT. One can recognise a Smr domain in the interval 681 to 756; it reads IDIRGMTVEE…GTGVTVVEVK (76 aa).

The protein belongs to the DNA mismatch repair MutS family. MutS2 subfamily. As to quaternary structure, homodimer. Binds to stalled ribosomes, contacting rRNA.

In terms of biological role, endonuclease that is involved in the suppression of homologous recombination and thus may have a key role in the control of bacterial genetic diversity. Acts as a ribosome collision sensor, splitting the ribosome into its 2 subunits. Detects stalled/collided 70S ribosomes which it binds and splits by an ATP-hydrolysis driven conformational change. Acts upstream of the ribosome quality control system (RQC), a ribosome-associated complex that mediates the extraction of incompletely synthesized nascent chains from stalled ribosomes and their subsequent degradation. Probably generates substrates for RQC. The polypeptide is Endonuclease MutS2 (Thermotoga sp. (strain RQ2)).